A 1117-amino-acid chain; its full sequence is Isoleucine--tRNA ligase (1117 aa).

The 'HIGH' region motif lies at 64-74 (PFANGLPHYGH). The 'KMSKS' region signature appears at 647-651 (KLSKR). Lys-650 is an ATP binding site.

Belongs to the class-I aminoacyl-tRNA synthetase family. IleS type 2 subfamily. In terms of assembly, monomer. Requires Zn(2+) as cofactor.

The protein resides in the cytoplasm. It catalyses the reaction tRNA(Ile) + L-isoleucine + ATP = L-isoleucyl-tRNA(Ile) + AMP + diphosphate. Catalyzes the attachment of isoleucine to tRNA(Ile). As IleRS can inadvertently accommodate and process structurally similar amino acids such as valine, to avoid such errors it has two additional distinct tRNA(Ile)-dependent editing activities. One activity is designated as 'pretransfer' editing and involves the hydrolysis of activated Val-AMP. The other activity is designated 'posttransfer' editing and involves deacylation of mischarged Val-tRNA(Ile). The chain is Isoleucine--tRNA ligase from Ehrlichia ruminantium (strain Welgevonden).